A 513-amino-acid polypeptide reads, in one-letter code: ATP synthase subunit alpha (513 aa).

Residue 169–176 (GDRQTGKT) coordinates ATP.

Belongs to the ATPase alpha/beta chains family. In terms of assembly, F-type ATPases have 2 components, CF(1) - the catalytic core - and CF(0) - the membrane proton channel. CF(1) has five subunits: alpha(3), beta(3), gamma(1), delta(1), epsilon(1). CF(0) has three main subunits: a(1), b(2) and c(9-12). The alpha and beta chains form an alternating ring which encloses part of the gamma chain. CF(1) is attached to CF(0) by a central stalk formed by the gamma and epsilon chains, while a peripheral stalk is formed by the delta and b chains.

It is found in the cell inner membrane. It carries out the reaction ATP + H2O + 4 H(+)(in) = ADP + phosphate + 5 H(+)(out). In terms of biological role, produces ATP from ADP in the presence of a proton gradient across the membrane. The alpha chain is a regulatory subunit. This Halorhodospira halophila (strain DSM 244 / SL1) (Ectothiorhodospira halophila (strain DSM 244 / SL1)) protein is ATP synthase subunit alpha.